The sequence spans 512 residues: Phospho-2-dehydro-3-deoxyheptonate aldolase 2, chloroplastic (512 aa).

The transit peptide at 1–57 (MALTATATTRGGSALPNSCLQTPKFQSLQKPTFISSFPTNKKTKPRTKHISAVQSPP) directs the protein to the chloroplast. Positions 37–57 (FPTNKKTKPRTKHISAVQSPP) are disordered. C126 is a binding site for Mn(2+). Substrate is bound by residues R165, 324–325 (ER), K347, and R378. Residues H410, E452, and D482 each contribute to the Mn(2+) site.

The protein belongs to the class-II DAHP synthase family. In terms of assembly, homodimer. It depends on Mn(2+) as a cofactor. Mostly expressed in leaves and stems, and, to a lower extent, in roots, stigmas, anthers, petal tubes, petal limbs and sepals.

It localises to the plastid. It is found in the chloroplast. It catalyses the reaction D-erythrose 4-phosphate + phosphoenolpyruvate + H2O = 7-phospho-2-dehydro-3-deoxy-D-arabino-heptonate + phosphate. It participates in metabolic intermediate biosynthesis; chorismate biosynthesis; chorismate from D-erythrose 4-phosphate and phosphoenolpyruvate: step 1/7. Its function is as follows. Involved in the production of volatile organic compounds (VOCs). Catalyzes an aldol-like condensation reaction between phosphoenolpyruvate (PEP) and D-erythrose 4-phosphate (E4P) to generate 3-deoxy-D-arabino-heptulosonate 7-phosphate (DAH7P) and inorganic phosphate. In Petunia hybrida (Petunia), this protein is Phospho-2-dehydro-3-deoxyheptonate aldolase 2, chloroplastic.